Reading from the N-terminus, the 206-residue chain is Uridine kinase (206 aa).

11 to 18 (GGSASGKT) is an ATP binding site.

It belongs to the uridine kinase family.

It localises to the cytoplasm. The enzyme catalyses uridine + ATP = UMP + ADP + H(+). The catalysed reaction is cytidine + ATP = CMP + ADP + H(+). It participates in pyrimidine metabolism; CTP biosynthesis via salvage pathway; CTP from cytidine: step 1/3. The protein operates within pyrimidine metabolism; UMP biosynthesis via salvage pathway; UMP from uridine: step 1/1. This chain is Uridine kinase, found in Lactococcus lactis subsp. cremoris (strain MG1363).